A 443-amino-acid polypeptide reads, in one-letter code: Threonine/serine transporter TdcC (443 aa).

Helical transmembrane passes span 22 to 42 (TTWT…FFPI), 44 to 64 (AGFG…PIAF), 97 to 117 (GVVI…IYGV), 140 to 160 (FVAL…KDLM), 163 to 183 (VMSY…LSLI), 207 to 227 (ILIT…FSPI), 261 to 281 (MLMV…LSPA), 312 to 332 (AITL…KSFF), 366 to 386 (ISMI…PNIL), 389 to 409 (IEAM…MYAI), and 423 to 443 (DNVF…YKLF).

Belongs to the amino acid/polyamine transporter 2 family. SdaC/TdcC subfamily.

The protein localises to the cell inner membrane. It catalyses the reaction L-threonine(in) + H(+)(in) = L-threonine(out) + H(+)(out). The enzyme catalyses L-serine(in) + H(+)(in) = L-serine(out) + H(+)(out). Involved in the import of threonine and serine into the cell, with the concomitant import of a proton (symport system). In Escherichia coli O45:K1 (strain S88 / ExPEC), this protein is Threonine/serine transporter TdcC.